The primary structure comprises 336 residues: D-alanine--D-alanine ligase (336 aa).

Residues 124–330 form the ATP-grasp domain; it reads KMWFSALGVP…FTEYLIDVIG (207 aa). 154 to 209 serves as a coordination point for ATP; that stretch reads AFDNWGSVFVKAASQGSSVGCYKVDVKANIANVLKDAFSYAPYVVVEQTIHARELE. Mg(2+) is bound by residues Asp-284, Glu-297, and Asn-299.

This sequence belongs to the D-alanine--D-alanine ligase family. Requires Mg(2+) as cofactor. The cofactor is Mn(2+).

The protein localises to the cytoplasm. The enzyme catalyses 2 D-alanine + ATP = D-alanyl-D-alanine + ADP + phosphate + H(+). The protein operates within cell wall biogenesis; peptidoglycan biosynthesis. Functionally, cell wall formation. The chain is D-alanine--D-alanine ligase from Shewanella frigidimarina (strain NCIMB 400).